A 348-amino-acid chain; its full sequence is tRNA N6-adenosine threonylcarbamoyltransferase (348 aa).

Fe cation is bound by residues His-115 and His-119. Substrate is bound by residues Leu-137–Gly-141, Asp-170, Gly-183, and Asn-281. Asp-309 is a binding site for Fe cation.

Belongs to the KAE1 / TsaD family. Fe(2+) is required as a cofactor.

It is found in the cytoplasm. The catalysed reaction is L-threonylcarbamoyladenylate + adenosine(37) in tRNA = N(6)-L-threonylcarbamoyladenosine(37) in tRNA + AMP + H(+). In terms of biological role, required for the formation of a threonylcarbamoyl group on adenosine at position 37 (t(6)A37) in tRNAs that read codons beginning with adenine. Is involved in the transfer of the threonylcarbamoyl moiety of threonylcarbamoyl-AMP (TC-AMP) to the N6 group of A37, together with TsaE and TsaB. TsaD likely plays a direct catalytic role in this reaction. The polypeptide is tRNA N6-adenosine threonylcarbamoyltransferase (Methylobacterium sp. (strain 4-46)).